The following is a 319-amino-acid chain: HTH-type transcriptional regulator YidZ (319 aa).

One can recognise an HTH lysR-type domain in the interval L8–T65. Residues V25–A44 constitute a DNA-binding region (H-T-H motif).

This sequence belongs to the LysR transcriptional regulatory family.

Functionally, involved in anaerobic NO protection. In Escherichia coli O139:H28 (strain E24377A / ETEC), this protein is HTH-type transcriptional regulator YidZ.